We begin with the raw amino-acid sequence, 60 residues long: Large ribosomal subunit protein bL32 (60 aa).

Over residues 1 to 23 (MAKHPVPKKKTSKARRDARRSHH) the composition is skewed to basic residues. Residues 1–30 (MAKHPVPKKKTSKARRDARRSHHALTPPTL) are disordered.

As to quaternary structure, part of the 50S ribosomal subunit.

Functionally, found on the solvent side of the large subunit. The protein is Large ribosomal subunit protein bL32 (rpmF) of Thermus thermophilus (strain ATCC 27634 / DSM 579 / HB8).